Here is a 756-residue protein sequence, read N- to C-terminus: 5-methyltetrahydropteroyltriglutamate--homocysteine methyltransferase (756 aa).

5-methyltetrahydropteroyltri-L-glutamate contacts are provided by residues 16–19 (RELK) and Lys-112. L-homocysteine is bound by residues 432–434 (IGS) and Glu-485. Residues 432 to 434 (IGS) and Glu-485 contribute to the L-methionine site. Residues 516–517 (RC) and Trp-562 each bind 5-methyltetrahydropteroyltri-L-glutamate. Residue Asp-600 coordinates L-homocysteine. Asp-600 serves as a coordination point for L-methionine. 5-methyltetrahydropteroyltri-L-glutamate is bound at residue Glu-606. 3 residues coordinate Zn(2+): His-642, Cys-644, and Glu-666. His-695 (proton donor) is an active-site residue. Residue Cys-727 coordinates Zn(2+).

It belongs to the vitamin-B12 independent methionine synthase family. It depends on Zn(2+) as a cofactor.

The catalysed reaction is 5-methyltetrahydropteroyltri-L-glutamate + L-homocysteine = tetrahydropteroyltri-L-glutamate + L-methionine. Its pathway is amino-acid biosynthesis; L-methionine biosynthesis via de novo pathway; L-methionine from L-homocysteine (MetE route): step 1/1. Catalyzes the transfer of a methyl group from 5-methyltetrahydrofolate to homocysteine resulting in methionine formation. The protein is 5-methyltetrahydropteroyltriglutamate--homocysteine methyltransferase of Haemophilus influenzae (strain PittGG).